The following is a 527-amino-acid chain: tRNA-2-methylthio-N(6)-dimethylallyladenosine synthase (527 aa).

The segment at 1–27 (MMNEKQRLQYTAQIETDHPTDKKSALD) is disordered. Residues 15 to 27 (ETDHPTDKKSALD) are compositionally biased toward basic and acidic residues. Residues 84–202 (RKFYIRTYGC…LPYILKEAYM (119 aa)) form the MTTase N-terminal domain. [4Fe-4S] cluster contacts are provided by Cys-93, Cys-129, Cys-163, Cys-239, Cys-243, and Cys-246. Residues 225–455 (RKGNIKAWVN…NALVNEISAK (231 aa)) enclose the Radical SAM core domain. The TRAM domain occupies 458–521 (KEYEGQVVEV…TWTLNGEMVE (64 aa)).

The protein belongs to the methylthiotransferase family. MiaB subfamily. As to quaternary structure, monomer. It depends on [4Fe-4S] cluster as a cofactor.

The protein resides in the cytoplasm. It catalyses the reaction N(6)-dimethylallyladenosine(37) in tRNA + (sulfur carrier)-SH + AH2 + 2 S-adenosyl-L-methionine = 2-methylsulfanyl-N(6)-dimethylallyladenosine(37) in tRNA + (sulfur carrier)-H + 5'-deoxyadenosine + L-methionine + A + S-adenosyl-L-homocysteine + 2 H(+). Catalyzes the methylthiolation of N6-(dimethylallyl)adenosine (i(6)A), leading to the formation of 2-methylthio-N6-(dimethylallyl)adenosine (ms(2)i(6)A) at position 37 in tRNAs that read codons beginning with uridine. This chain is tRNA-2-methylthio-N(6)-dimethylallyladenosine synthase, found in Anoxybacillus flavithermus (strain DSM 21510 / WK1).